We begin with the raw amino-acid sequence, 34 residues long: Delta-conotoxin AtVIA (34 aa).

A propeptide spanning residues 1-4 (LSKK) is cleaved from the precursor. Position 5 is a pyrrolidone carboxylic acid (glutamine 5). 3 cysteine pairs are disulfide-bonded: cysteine 6–cysteine 23, cysteine 13–cysteine 27, and cysteine 22–cysteine 31.

In terms of tissue distribution, expressed by the venom duct.

The protein resides in the secreted. Probable toxin from a worm-hunter cone snail. Shows an excitatory activity on a majority of mouse lumbar dorsal root ganglion (DRG) neurons. Very probably inhibits the inactivation of voltage-gated sodium channels (Nav). The sequence is that of Delta-conotoxin AtVIA from Conus ateralbus (Cone snail).